A 752-amino-acid polypeptide reads, in one-letter code: MAKRSRSEDEDDDLQYADHDYEVPQQKGLKKLWNRVKWTRDEDDKLKKLVEQHGTDDWTLIASHLQNRSDFQCQHRWQKVLNPELIKGPWTKEEDQRVIELVQKYGPKRWSLIAKHLKGRIGKQCRERWHNHLNPEVKKSSWTEEEDRIIYEAHKRLGNRWAEIAKLLPGRTDNSIKNHWNSTMRRKVEQEGYLQDGIKSERSSSKLQHKPCAAMDHMQTQNQFYIPVQIPGYQYVSPEGNCIEHVQPTSAFIQQPFIDEDPDKEKKIKELEMLLMSAENEVRRKRIPSQPGSFSSWSGSFLMDDNMSNTLNSLDEHTSEFYSMDENQPVSAQQNSPTKFLAVEANAVLSSLQTIPEFAETLELIESDPVAWSDVTSFDISDAAASPIKSTPVKLMRIQHNEGAMECQFNVSLVLEGKKNTCNGGNSEAVPLTSPNIAKFSTPPAILRKKRKMRVGHSPGSELRDGSLNDGGNMALKHTPLKTLPFSPSQFFNTCPGNEQLNIENPSFTSTPICGQKALITTPLHKETTPKDQKENVGFRTPTIRRSILGTTPRTPTPFKNALAAQEKKYGPLKIVSQPLAFLEEDIREVLKEETGTDLFLKEEDEPAYKSCKQENTASGKKVRKSLVLDNWEKEESGTQLLTEDISDMQSENRFTTSLLMIPLLEIHDNRCNLIPEKQDINSTNKTYTLTKKKPNPNTSKVVKLEKNLQSNCEWETVVYGKTEDQLIMTEQARRYLSTYTATSSTSRALIL.

The disordered stretch occupies residues 1-22; it reads MAKRSRSEDEDDDLQYADHDYE. HTH myb-type domains lie at 30-81, 82-137, and 138-188; these read KKLW…QKVL, NPEL…NPEV, and KKSS…RRKV. 3 DNA-binding regions (H-T-H motif) span residues 58–81, 110–133, and 161–184; these read WTLI…QKVL, WSLI…HNHL, and WAEI…NSTM. Residue Lys-199 forms a Glycyl lysine isopeptide (Lys-Gly) (interchain with G-Cter in SUMO2) linkage. The tract at residues 230-295 is transcriptional activation domain; that stretch reads IPGYQYVSPE…RIPSQPGSFS (66 aa). Residues 298–553 are negative regulatory domain; that stretch reads SGSFLMDDNM…IRRSILGTTP (256 aa). Position 394 is an N6-acetyllysine (Lys-394). The tract at residues 451–480 is disordered; that stretch reads RKMRVGHSPGSELRDGSLNDGGNMALKHTP. Residues Lys-592 and Lys-602 each participate in a glycyl lysine isopeptide (Lys-Gly) (interchain with G-Cter in SUMO2) cross-link.

Component of the DREAM complex (also named LINC complex) at least composed of E2F4, E2F5, LIN9, LIN37, LIN52, LIN54, MYBL1, MYBL2, RBL1, RBL2, RBBP4, TFDP1 and TFDP2. The complex exists in quiescent cells where it represses cell cycle-dependent genes. It dissociates in S phase when LIN9, LIN37, LIN52 and LIN54 form a subcomplex that binds to MYBL2. As to expression, expressed in a variety of lymphoid and solid tumor lines cultured in vitro.

It is found in the nucleus. Its function is as follows. Transcription factor that specifically recognizes the sequence 5'-YAAC[GT]G-3'. Acts as a master regulator of male meiosis by promoting expression of piRNAs: activates expression of both piRNA precursor RNAs and expression of protein-coding genes involved in piRNA metabolism. The piRNA metabolic process mediates the repression of transposable elements during meiosis by forming complexes composed of piRNAs and Piwi proteins and governs the methylation and subsequent repression of transposons, which is essential for the germline integrity. Transcriptional activator of SOX30. In Homo sapiens (Human), this protein is Myb-related protein A (MYBL1).